A 242-amino-acid chain; its full sequence is ATP synthase subunit a (242 aa).

Transmembrane regions (helical) follow at residues 21-41, 83-103, 118-137, 175-195, and 198-218; these read LASVLMVVITAILVFILAIVC, AVTLILFIFVANMLGLPFAIV, ATVTLTLSTTMILLTHYYGI, LYGNIFAGELLLGLLASLFFE, and AWGWIISIPGLIVWQAFSIFV.

The protein belongs to the ATPase A chain family. F-type ATPases have 2 components, CF(1) - the catalytic core - and CF(0) - the membrane proton channel. CF(1) has five subunits: alpha(3), beta(3), gamma(1), delta(1), epsilon(1). CF(0) has three main subunits: a(1), b(2) and c(9-12). The alpha and beta chains form an alternating ring which encloses part of the gamma chain. CF(1) is attached to CF(0) by a central stalk formed by the gamma and epsilon chains, while a peripheral stalk is formed by the delta and b chains.

The protein resides in the cell membrane. Key component of the proton channel; it plays a direct role in the translocation of protons across the membrane. In Staphylococcus epidermidis (strain ATCC 35984 / DSM 28319 / BCRC 17069 / CCUG 31568 / BM 3577 / RP62A), this protein is ATP synthase subunit a.